The following is a 561-amino-acid chain: Phosphatidylinositol 4-kinase gamma 1 (561 aa).

In terms of domain architecture, PI3K/PI4K catalytic spans 121–416 (GAQPLLLPSG…SVFGKTSEDS (296 aa)). Residues 127-133 (LPSGMGG) are G-loop. ATP-binding positions include 128–134 (PSGMGGA), Lys-149, and 233–236 (QRFV). Residues 266-274 (LNLDRHAGN) form a catalytic loop region. An activation loop region spans residues 296 to 322 (PIDHGLCLPECLDDPYFEWLNWPQALV). Position 298 (Asp-298) interacts with ATP. The tract at residues 456–520 (PPLVPRGPRA…PISPNHDESK (65 aa)) is disordered. The span at 467–484 (TIPNDVTASMSSSQNQRI) shows a compositional bias: polar residues.

It belongs to the PI3/PI4-kinase family. Type II PI4K subfamily.

The catalysed reaction is a 1,2-diacyl-sn-glycero-3-phospho-(1D-myo-inositol) + ATP = a 1,2-diacyl-sn-glycero-3-phospho-(1D-myo-inositol 4-phosphate) + ADP + H(+). The phosphorylation of phosphatidylinositol (PI) to PI4P is the first committed step in the generation of phosphatidylinositol 4,5-bisphosphate (PIP2), a precursor of the second messenger inositol 1,4,5-trisphosphate (InsP3). In Arabidopsis thaliana (Mouse-ear cress), this protein is Phosphatidylinositol 4-kinase gamma 1 (PI4KG1).